The primary structure comprises 94 residues: METVLVLCSLLAPVVLASAAEKEKEKDPFYYDYQTLRIGGLVFAVVLFSVGILLILSRRCKCSFNQKPRAPGDEEAQVENLITTNAAEPQKAEN.

A signal peptide spans methionine 1 to alanine 17. Topologically, residues serine 18–glutamine 34 are extracellular. The chain crosses the membrane as a helical span at residues threonine 35–serine 57. Residues arginine 58–asparagine 94 are Cytoplasmic-facing.

Belongs to the FXYD family. Regulatory subunit of the sodium/potassium-transporting ATPase which is composed of a catalytic alpha subunit, a non-catalytic beta subunit and an additional regulatory subunit. The regulatory subunit, a member of the FXYD protein family, modulates the enzymatic activity in a tissue- and isoform-specific way by changing affinities of the Na+/K+-ATPase toward Na(+), K(+) or ATP.

Its subcellular location is the cell membrane. Functionally, associates with and regulates the activity of the sodium/potassium-transporting ATPase (NKA) which catalyzes the hydrolysis of ATP coupled with the exchange of Na(+) and K(+) ions across the plasma membrane. Reduces the apparent affinity for intracellular Na(+) with no change in the apparent affinity for extracellular K(+). In addition to modulating NKA kinetics, may also function as a regulator of NKA localization to the plasma membrane. The chain is FXYD domain-containing ion transport regulator 6 (Fxyd6) from Mus musculus (Mouse).